A 398-amino-acid chain; its full sequence is MENETGSELNQTQLQPRAVVALEYQVVTILLVLIICGLGIVGNIMVVLVVMRTKHMRTPTNCYLVSLAVADLMVLVAAGLPNITDSIYGSWVYGYVGCLCITYLQYLGINASSCSITAFTIERYIAICHPIKAQFLCTFSRAKKIIIFVWAFTSIYCMLWFFLLDLNISTYKDAIVVSCGYKISRNYYSPIYLMDFGVFYVVPMILATVLYGFIARILFLNPIPSDPKENSNMWKNDSTHQNKNLNSKTSNRYFNSTVSSRKQVTKMLAVVVILFALLWMPYRTLVVVNSFLSSPFQENWFLLFCRICIYLNSAINPVIYNLMSQKFRAAFRKLCNCKQKPVEKPANYSVALSYSVIKESDRFSTELDDVTVTDTYLSATKVSFDDTCLASEITFNQS.

Residues 1-28 (MENETGSELNQTQLQPRAVVALEYQVVT) are Extracellular-facing. N-linked (GlcNAc...) asparagine glycosylation is found at N3 and N10. A helical membrane pass occupies residues 29-51 (ILLVLIICGLGIVGNIMVVLVVM). The Cytoplasmic segment spans residues 52–61 (RTKHMRTPTN). A helical membrane pass occupies residues 62–83 (CYLVSLAVADLMVLVAAGLPNI). Residues 84 to 99 (TDSIYGSWVYGYVGCL) lie on the Extracellular side of the membrane. C98 and C179 are oxidised to a cystine. The helical transmembrane segment at 100–121 (CITYLQYLGINASSCSITAFTI) threads the bilayer. Topologically, residues 122–144 (ERYIAICHPIKAQFLCTFSRAKK) are cytoplasmic. The helical transmembrane segment at 145-168 (IIIFVWAFTSIYCMLWFFLLDLNI) threads the bilayer. At 169 to 193 (STYKDAIVVSCGYKISRNYYSPIYL) the chain is on the extracellular side. Residues 194–215 (MDFGVFYVVPMILATVLYGFIA) traverse the membrane as a helical segment. The Cytoplasmic segment spans residues 216 to 266 (RILFLNPIPSDPKENSNMWKNDSTHQNKNLNSKTSNRYFNSTVSSRKQVTK). The chain crosses the membrane as a helical span at residues 267-288 (MLAVVVILFALLWMPYRTLVVV). The Extracellular segment spans residues 289 to 296 (NSFLSSPF). The chain crosses the membrane as a helical span at residues 297–319 (QENWFLLFCRICIYLNSAINPVI). The Cytoplasmic portion of the chain corresponds to 320–398 (YNLMSQKFRA…LASEITFNQS (79 aa)).

Belongs to the G-protein coupled receptor 1 family.

The protein resides in the cell membrane. Receptor for thyrotropin-releasing hormone (TRH). Upon ligand binding, this G-protein-coupled receptor triggers activation of the phosphatidylinositol (IP3)-calcium-protein kinase C (PKC) pathway. In Bos taurus (Bovine), this protein is Thyrotropin-releasing hormone receptor (TRHR).